A 446-amino-acid polypeptide reads, in one-letter code: UDP-N-acetylmuramoylalanine--D-glutamate ligase (446 aa).

Position 118–124 (118–124 (GSNGKST)) interacts with ATP.

This sequence belongs to the MurCDEF family.

It is found in the cytoplasm. The enzyme catalyses UDP-N-acetyl-alpha-D-muramoyl-L-alanine + D-glutamate + ATP = UDP-N-acetyl-alpha-D-muramoyl-L-alanyl-D-glutamate + ADP + phosphate + H(+). It participates in cell wall biogenesis; peptidoglycan biosynthesis. Cell wall formation. Catalyzes the addition of glutamate to the nucleotide precursor UDP-N-acetylmuramoyl-L-alanine (UMA). This Pseudoalteromonas translucida (strain TAC 125) protein is UDP-N-acetylmuramoylalanine--D-glutamate ligase.